The primary structure comprises 524 residues: 12S seed storage protein CRC (524 aa).

Residues 1 to 23 form the signal peptide; sequence MVKLSNLLVATFGVLLVLNGCLA. A disulfide bridge links Cys37 with Cys70. 2 Cupin type-1 domains span residues 42–289 and 346–495; these read LDVL…QLAQ and ENID…EEAR. Position 53 is a phosphoserine (Ser53). A Phosphotyrosine modification is found at Tyr78. Residue Ser97 is modified to Phosphoserine. The cysteines at positions 113 and 340 are disulfide-linked. At Thr116 the chain carries Phosphothreonine. The disordered stretch occupies residues 119 to 190; sequence DSQPMQGQQQ…QGQQGQQGFR (72 aa). Residues 124–188 are compositionally biased toward low complexity; it reads QGQQQGQPWQ…EGQGQQGQQG (65 aa). Phosphoserine occurs at positions 259 and 366. Position 459 is a phosphothreonine (Thr459). At Ser484 the chain carries Phosphoserine. Thr501 is subject to Phosphothreonine.

Belongs to the 11S seed storage protein (globulins) family. In terms of assembly, hexamer; each subunit is composed of an acidic and a basic chain derived from a single precursor and linked by a disulfide bond. Proteolytically processed during seed maturation at a conserved Asn-Gly peptide bond by an asparaginyl endopeptidase to produce two mature polypeptides referred to as alpha and beta subunits that are joined together by a disulfide bond. Post-translationally, phosphorylated in seeds on some Tyr residues in response to abscisic acid (ABA). As to expression, accumulates in seeds 8 days after anthesis.

The protein resides in the protein storage vacuole. Its function is as follows. Seed storage protein. The protein is 12S seed storage protein CRC (CRC) of Arabidopsis thaliana (Mouse-ear cress).